Consider the following 546-residue polypeptide: Chaperonin GroEL (546 aa).

Residues 30–33 (TLGP), Lys51, 87–91 (DGTTT), Gly415, 479–481 (NAA), and Asp495 contribute to the ATP site.

The protein belongs to the chaperonin (HSP60) family. As to quaternary structure, forms a cylinder of 14 subunits composed of two heptameric rings stacked back-to-back. Interacts with the co-chaperonin GroES.

Its subcellular location is the cytoplasm. It carries out the reaction ATP + H2O + a folded polypeptide = ADP + phosphate + an unfolded polypeptide.. Together with its co-chaperonin GroES, plays an essential role in assisting protein folding. The GroEL-GroES system forms a nano-cage that allows encapsulation of the non-native substrate proteins and provides a physical environment optimized to promote and accelerate protein folding. In Xanthomonas axonopodis pv. citri (strain 306), this protein is Chaperonin GroEL.